A 287-amino-acid polypeptide reads, in one-letter code: AA9 family lytic polysaccharide monooxygenase C (287 aa).

The signal sequence occupies residues 1–16 (MKSVLVALATATAVSA). Residue His17 participates in Cu(2+) binding. Asn22 is a glycosylation site (N-linked (GlcNAc...) asparagine). Intrachain disulfides connect Cys77–Cys230 and Cys200–Cys284. Position 114 (His114) interacts with Cu(2+). O2 is bound by residues His216 and Gln225. Tyr227 is a Cu(2+) binding site.

It belongs to the polysaccharide monooxygenase AA9 family. It depends on Cu(2+) as a cofactor.

The protein localises to the secreted. It catalyses the reaction [(1-&gt;4)-beta-D-glucosyl]n+m + reduced acceptor + O2 = 4-dehydro-beta-D-glucosyl-[(1-&gt;4)-beta-D-glucosyl]n-1 + [(1-&gt;4)-beta-D-glucosyl]m + acceptor + H2O.. Functionally, lytic polysaccharide monooxygenase (LPMO) that depolymerizes crystalline and amorphous polysaccharides via the oxidation of scissile alpha- or beta-(1-4)-glycosidic bonds, yielding C1 or C4 oxidation products. Catalysis by LPMOs requires the reduction of the active-site copper from Cu(II) to Cu(I) by a reducing agent and H(2)O(2) or O(2) as a cosubstrate. This Podospora anserina (strain S / ATCC MYA-4624 / DSM 980 / FGSC 10383) (Pleurage anserina) protein is AA9 family lytic polysaccharide monooxygenase C.